The primary structure comprises 372 residues: Cytochrome b (372 aa).

A run of 4 helical transmembrane segments spans residues 25–45, 69–90, 105–125, and 170–190; these read FGSM…FLAI, WCLQ…YIHI, WMSG…GYVL, and FFAL…IHII. Positions 75 and 89 each coordinate heme b. Heme b-binding residues include H174 and H188. Residue H193 participates in a ubiquinone binding. 4 helical membrane-spanning segments follow: residues 218–238, 280–300, 312–332, and 339–358; these read YKDL…MSFS, LGGT…PFTH, MAQF…WAAS, and YITI…IINP.

Belongs to the cytochrome b family. As to quaternary structure, the cytochrome bc1 complex contains 3 respiratory subunits (MT-CYB, CYC1 and UQCRFS1), 2 core proteins (UQCRC1 and UQCRC2) and probably 6 low-molecular weight proteins. It depends on heme b as a cofactor.

It localises to the mitochondrion inner membrane. In terms of biological role, component of the ubiquinol-cytochrome c reductase complex (complex III or cytochrome b-c1 complex) that is part of the mitochondrial respiratory chain. The b-c1 complex mediates electron transfer from ubiquinol to cytochrome c. Contributes to the generation of a proton gradient across the mitochondrial membrane that is then used for ATP synthesis. The sequence is that of Cytochrome b (MT-CYB) from Acrochordus granulatus (Rasp-skinned water snake).